We begin with the raw amino-acid sequence, 244 residues long: L-xylulose reductase (244 aa).

Met1 bears the N-acetylmethionine mark. 11-39 lines the NADP(+) pocket; that stretch reads LVTGAGKGIGRSTVLALQAAGAHVVAVSR. Arg21 is modified (omega-N-methylarginine). The residue at position 46 (Ser46) is a Phosphoserine. Ser136 is a substrate binding site. The active-site Proton acceptor is Tyr149. Lys153 is an active-site residue.

Belongs to the short-chain dehydrogenases/reductases (SDR) family. In terms of assembly, homotetramer. As to expression, highly expressed in kidney and liver. Expressed in epididymis. Weakly expressed in brain, heart, lung, spleen and testis.

The protein resides in the membrane. It is found in the cytoplasmic vesicle. The protein localises to the secretory vesicle. It localises to the acrosome. It catalyses the reaction xylitol + NADP(+) = L-xylulose + NADPH + H(+). Catalyzes the NADPH-dependent reduction of several pentoses, tetroses, trioses, alpha-dicarbonyl compounds and L-xylulose. Participates in the uronate cycle of glucose metabolism. May play a role in the water absorption and cellular osmoregulation in the proximal renal tubules by producing xylitol, an osmolyte, thereby preventing osmolytic stress from occurring in the renal tubules. The protein is L-xylulose reductase (DCXR) of Mesocricetus auratus (Golden hamster).